A 99-amino-acid chain; its full sequence is RNA-binding protein HI_1333 (99 aa).

Residues 2–98 form the CRM domain; sequence TTLSTKQKQF…SEEAKIQLPR (97 aa).

The polypeptide is RNA-binding protein HI_1333 (Haemophilus influenzae (strain ATCC 51907 / DSM 11121 / KW20 / Rd)).